The following is a 236-amino-acid chain: Phosphoribosylaminoimidazole-succinocarboxamide synthase (236 aa).

The protein belongs to the SAICAR synthetase family.

The catalysed reaction is 5-amino-1-(5-phospho-D-ribosyl)imidazole-4-carboxylate + L-aspartate + ATP = (2S)-2-[5-amino-1-(5-phospho-beta-D-ribosyl)imidazole-4-carboxamido]succinate + ADP + phosphate + 2 H(+). Its pathway is purine metabolism; IMP biosynthesis via de novo pathway; 5-amino-1-(5-phospho-D-ribosyl)imidazole-4-carboxamide from 5-amino-1-(5-phospho-D-ribosyl)imidazole-4-carboxylate: step 1/2. This is Phosphoribosylaminoimidazole-succinocarboxamide synthase from Pseudomonas putida (strain W619).